The following is a 756-amino-acid chain: Pro-neuregulin-2, membrane-bound isoform (756 aa).

The propeptide occupies Met-1–Ala-19. At Cys-20–Arg-315 the chain is on the extracellular side. 3 N-linked (GlcNAc...) asparagine glycosylation sites follow: Asn-55, Asn-186, and Asn-254. In terms of domain architecture, Ig-like C2-type spans Pro-145 to Ser-240. 4 disulfides stabilise this stretch: Cys-165-Cys-219, Cys-253-Cys-267, Cys-261-Cys-278, and Cys-280-Cys-289. In terms of domain architecture, EGF-like spans His-249–Gln-290. Asn-296 carries N-linked (GlcNAc...) asparagine glycosylation. The helical transmembrane segment at Val-316 to Ala-336 threads the bilayer. Over Tyr-337 to Leu-756 the chain is Cytoplasmic. Disordered stretches follow at residues Thr-402–Leu-439, Leu-557–Arg-578, Ala-608–Leu-694, and Leu-711–Leu-756. Residues Ser-404 to Ser-416 show a composition bias toward low complexity. The span at His-424–Glu-437 shows a compositional bias: basic and acidic residues. The span at Leu-654 to Ala-682 shows a compositional bias: low complexity.

Belongs to the neuregulin family. As to quaternary structure, interacts with ERBB3 and ERBB4. In terms of processing, proteolytic cleavage close to the plasma membrane on the external face leads to the release of the soluble growth factor form. Post-translationally, extensive glycosylation precedes the proteolytic cleavage. As to expression, highest expression in the brain, with lower levels in the lung. In the cerebellum, found in granule and Purkinje cells.

The protein resides in the cell membrane. The protein localises to the secreted. Functionally, direct ligand for ERBB3 and ERBB4 tyrosine kinase receptors. Concomitantly recruits ERBB1 and ERBB2 coreceptors, resulting in ligand-stimulated tyrosine phosphorylation and activation of the ERBB receptors. May also promote the heterodimerization with the EGF receptor. The chain is Pro-neuregulin-2, membrane-bound isoform (Nrg2) from Mus musculus (Mouse).